The sequence spans 888 residues: 3-hydroxy-3-methylglutaryl-coenzyme A reductase (888 aa).

Over 1-9 the chain is Cytoplasmic; the sequence is MLSRLFRMH. A helical transmembrane segment spans residues 10 to 39; sequence GLFVASHPWEVIVGTVTLTICMMSMNMFTG. Residues 40–56 are Lumenal-facing; the sequence is NNKICGWNYECPKLEED. Residues 57–78 form a helical membrane-spanning segment; sequence VLSSDIIILTITRCIAILYIYF. One can recognise an SSD domain in the interval 61-218; that stretch reads DIIILTITRC…MTFFPACVSL (158 aa). Positions 75–78 match the INSIG-binding motif motif; the sequence is YIYF. The Cytoplasmic portion of the chain corresponds to 79 to 89; it reads QFQNLRQLGSK. A Glycyl lysine isopeptide (Lys-Gly) (interchain with G-Cter in ubiquitin) cross-link involves residue K89. The chain crosses the membrane as a helical span at residues 90-114; sequence YILGIAGLFTIFSSFVFSTVVIHFL. Over 115–123 the chain is Lumenal; sequence DKELTGLNE. The helical transmembrane segment at 124-149 threads the bilayer; sequence ALPFFLLLVDLSRASALAKFALSSNS. At 150 to 159 the chain is on the cytoplasmic side; the sequence is QDEVRENIAR. The chain crosses the membrane as a helical span at residues 160–187; sequence GMAILGPTFTLDALVECLVIGVGTMSGV. At 188–191 the chain is on the lumenal side; sequence RQLE. Residues 192-220 traverse the membrane as a helical segment; sequence IMCCFGCMSVLANYFVFMTFFPACVSLVL. Residues 221 to 248 are Cytoplasmic-facing; that stretch reads ELSRESREGRPIWQLSHFARVLEEEENK. Residue K248 forms a Glycyl lysine isopeptide (Lys-Gly) (interchain with G-Cter in ubiquitin) linkage. The helical transmembrane segment at 249 to 275 threads the bilayer; the sequence is PNPVTQRVKMIMSLGLVLVHAHSRWIA. At 276-314 the chain is on the lumenal side; it reads DPSPQNSTADNSKVSLGLDENVSKRIEPSVSLWQFYLSK. N-linked (GlcNAc...) asparagine glycosylation is found at N281 and N296. A helical membrane pass occupies residues 315-339; that stretch reads MISMDIEQVITLSLALLLAVKYIFF. Over 340–888 the chain is Cytoplasmic; it reads EQAETESTLS…LQGTCTKKAA (549 aa). Residues E559, K691, and D767 each act as charge relay system in the active site. H866 (proton donor) is an active-site residue. A Phosphoserine; by AMPK modification is found at S872.

The protein belongs to the HMG-CoA reductase family. As to quaternary structure, homotetramer. Homodimer. Interacts (via its SSD) with INSIG1; the interaction, accelerated by sterols, leads to the recruitment of HMGCR to AMFR/gp78 for its ubiquitination by the sterol-mediated ERAD pathway. Interacts with UBIAD1. In terms of processing, undergoes sterol-mediated ubiquitination and ER-associated degradation (ERAD). Accumulation of sterols in the endoplasmic reticulum (ER) membrane, triggers binding of the reductase to the ER membrane protein INSIG1 or INSIG2. The INSIG1 binding leads to the recruitment of the ubiquitin ligase, AMFR/gp78, RNF139 or RNF145, initiating ubiquitination of the reductase. The ubiquitinated reductase is then extracted from the ER membrane and delivered to cytosolic 26S proteosomes by a mechanism probably mediated by the ATPase Valosin-containing protein VCP/p97. The INSIG2-binding leads to the recruitment of the ubiquitin ligase RNF139, initiating ubiquitination of the reductase. Lys-248 is the main site of ubiquitination. Ubiquitination is enhanced by the presence of a geranylgeranylated protein. N-glycosylated. Deglycosylated by NGLY1 on release from the endoplasmic reticulum (ER) in a sterol-mediated manner. Post-translationally, phosphorylated. Phosphorylation at Ser-872 reduces the catalytic activity.

The protein resides in the endoplasmic reticulum membrane. The protein localises to the peroxisome membrane. It carries out the reaction (R)-mevalonate + 2 NADP(+) + CoA = (3S)-3-hydroxy-3-methylglutaryl-CoA + 2 NADPH + 2 H(+). The protein operates within metabolic intermediate biosynthesis; (R)-mevalonate biosynthesis; (R)-mevalonate from acetyl-CoA: step 3/3. With respect to regulation, regulated by a negative feedback mechanism through sterols and non-sterol metabolites derived from mevalonate. Phosphorylation at Ser-872 down-regulates the catalytic activity. Catalyzes the conversion of (3S)-hydroxy-3-methylglutaryl-CoA (HMG-CoA) to mevalonic acid, the rate-limiting step in the synthesis of cholesterol and other isoprenoids, thus plays a critical role in cellular cholesterol homeostasis. The polypeptide is 3-hydroxy-3-methylglutaryl-coenzyme A reductase (HMGCR) (Bos taurus (Bovine)).